Reading from the N-terminus, the 443-residue chain is Leucine-rich repeat-containing protein 17 (443 aa).

An N-terminal signal peptide occupies residues 1–15 (MRIVAILLLFCLCRA). The interval 20–48 (KSSPGVLRSQGNPSRSHGRGGRRGSSPVK) is disordered. LRR repeat units follow at residues 84 to 105 (DLLHMLLARNKIRVLKNNMFAK), 108 to 129 (RLKSLDLQQNEISKIESEAFFG), and 132 to 153 (KLTTLLLQHNQIKVLTEEAFIY). Residues 165–216 (NPWHCTCELETLISMLQIPRNRNLGNYAKCGSPPALRNKKLLQLKPQELCDE) enclose the LRRCT 1 domain. One can recognise an LRRNT domain in the interval 229 to 270 (SGIPAVIRPEADSTLCHNYVFPIQTLDCKRKELKKVPSNIPP). 3 LRR repeats span residues 271 to 292 (DIVKLDLSSNKIRQLRPKEFED), 295 to 316 (ELKKLNLSSNGIEFIDPAAFLG), and 319 to 342 (HLEELDLSNNSLQNFDYGVLEDLY). An LRRCT 2 domain is found at 352 to 404 (NPWRCDYSIHYLYYWLKHHYNVHYNGLECKTPEEYKGWSVGKYVRSYYEECPK).

Expressed in osteoblasts, spleen, lung and heart.

It is found in the secreted. It localises to the extracellular space. Functionally, involved in bone homeostasis. Acts as a negative regulator of RANKL-induced osteoclast precursor differentiation from bone marrow precursors. The protein is Leucine-rich repeat-containing protein 17 (Lrrc17) of Mus musculus (Mouse).